The sequence spans 194 residues: ATP-dependent Clp protease proteolytic subunit 4 (194 aa).

Ser100 acts as the Nucleophile in catalysis. Residue His125 is part of the active site.

It belongs to the peptidase S14 family. Fourteen ClpP subunits assemble into 2 heptameric rings which stack back to back to give a disk-like structure with a central cavity, resembling the structure of eukaryotic proteasomes.

It is found in the cytoplasm. It catalyses the reaction Hydrolysis of proteins to small peptides in the presence of ATP and magnesium. alpha-casein is the usual test substrate. In the absence of ATP, only oligopeptides shorter than five residues are hydrolyzed (such as succinyl-Leu-Tyr-|-NHMec, and Leu-Tyr-Leu-|-Tyr-Trp, in which cleavage of the -Tyr-|-Leu- and -Tyr-|-Trp bonds also occurs).. Functionally, cleaves peptides in various proteins in a process that requires ATP hydrolysis. Has a chymotrypsin-like activity. Plays a major role in the degradation of misfolded proteins. This chain is ATP-dependent Clp protease proteolytic subunit 4, found in Rhodococcus jostii (strain RHA1).